The chain runs to 104 residues: Pyrimidine/purine nucleoside phosphorylase (104 aa).

This sequence belongs to the nucleoside phosphorylase PpnP family.

The enzyme catalyses a purine D-ribonucleoside + phosphate = a purine nucleobase + alpha-D-ribose 1-phosphate. It catalyses the reaction adenosine + phosphate = alpha-D-ribose 1-phosphate + adenine. The catalysed reaction is cytidine + phosphate = cytosine + alpha-D-ribose 1-phosphate. It carries out the reaction guanosine + phosphate = alpha-D-ribose 1-phosphate + guanine. The enzyme catalyses inosine + phosphate = alpha-D-ribose 1-phosphate + hypoxanthine. It catalyses the reaction thymidine + phosphate = 2-deoxy-alpha-D-ribose 1-phosphate + thymine. The catalysed reaction is uridine + phosphate = alpha-D-ribose 1-phosphate + uracil. It carries out the reaction xanthosine + phosphate = alpha-D-ribose 1-phosphate + xanthine. Functionally, catalyzes the phosphorolysis of diverse nucleosides, yielding D-ribose 1-phosphate and the respective free bases. Can use uridine, adenosine, guanosine, cytidine, thymidine, inosine and xanthosine as substrates. Also catalyzes the reverse reactions. This is Pyrimidine/purine nucleoside phosphorylase from Colwellia psychrerythraea (strain 34H / ATCC BAA-681) (Vibrio psychroerythus).